A 428-amino-acid chain; its full sequence is 3-phosphoshikimate 1-carboxyvinyltransferase (428 aa).

3-phosphoshikimate contacts are provided by Lys21, Ser22, and Arg26. Lys21 contacts phosphoenolpyruvate. Positions 91 and 119 each coordinate phosphoenolpyruvate. Positions 164, 166, 313, and 340 each coordinate 3-phosphoshikimate. Gln166 contributes to the phosphoenolpyruvate binding site. The active-site Proton acceptor is the Asp313. The phosphoenolpyruvate site is built by Arg344 and Arg386.

This sequence belongs to the EPSP synthase family. As to quaternary structure, monomer.

The protein resides in the cytoplasm. It catalyses the reaction 3-phosphoshikimate + phosphoenolpyruvate = 5-O-(1-carboxyvinyl)-3-phosphoshikimate + phosphate. Its pathway is metabolic intermediate biosynthesis; chorismate biosynthesis; chorismate from D-erythrose 4-phosphate and phosphoenolpyruvate: step 6/7. Functionally, catalyzes the transfer of the enolpyruvyl moiety of phosphoenolpyruvate (PEP) to the 5-hydroxyl of shikimate-3-phosphate (S3P) to produce enolpyruvyl shikimate-3-phosphate and inorganic phosphate. The protein is 3-phosphoshikimate 1-carboxyvinyltransferase of Campylobacter jejuni (strain RM1221).